A 291-amino-acid polypeptide reads, in one-letter code: Stomatin-like protein 3 (291 aa).

The residue at position 7 (Ser-7) is a Phosphoserine. The chain crosses the membrane as a helical; Signal-anchor for type III membrane protein span at residues 29–49 (WILFSLSFLLVIITFPISIWM). The Cytoplasmic portion of the chain corresponds to 50–291 (CLKIIKEYER…DNHKKLPNKA (242 aa)). At Ser-241 the chain carries Phosphoserine.

It belongs to the band 7/mec-2 family. As to quaternary structure, homodimer. Interacts with PIEZO1 and PIEZO2.

The protein localises to the cell membrane. Its function is as follows. Required for the function of many mechanoreceptors. Modulate mechanotransduction channels and acid-sensing ion channels (ASIC) proteins. Potentiates PIEZO1 and PIEZO2 function by increasing their sensitivity to mechanical stimulations. This chain is Stomatin-like protein 3 (STOML3), found in Homo sapiens (Human).